We begin with the raw amino-acid sequence, 964 residues long: Glycine dehydrogenase (decarboxylating) (964 aa).

Over residues 1–10 (MNSTLQNRNR) the composition is skewed to polar residues. Residues 1 to 25 (MNSTLQNRNRTNLERVSTDPLDTFP) form a disordered region. Lys-713 is modified (N6-(pyridoxal phosphate)lysine).

It belongs to the GcvP family. The glycine cleavage system is composed of four proteins: P, T, L and H. Pyridoxal 5'-phosphate is required as a cofactor.

It carries out the reaction N(6)-[(R)-lipoyl]-L-lysyl-[glycine-cleavage complex H protein] + glycine + H(+) = N(6)-[(R)-S(8)-aminomethyldihydrolipoyl]-L-lysyl-[glycine-cleavage complex H protein] + CO2. The glycine cleavage system catalyzes the degradation of glycine. The P protein binds the alpha-amino group of glycine through its pyridoxal phosphate cofactor; CO(2) is released and the remaining methylamine moiety is then transferred to the lipoamide cofactor of the H protein. In Leptospira borgpetersenii serovar Hardjo-bovis (strain JB197), this protein is Glycine dehydrogenase (decarboxylating).